Here is a 150-residue protein sequence, read N- to C-terminus: Deoxyuridine 5'-triphosphate nucleotidohydrolase (150 aa).

Substrate is bound by residues 69 to 71 (RSG), Asn-82, 86 to 88 (LID), and Met-96.

It belongs to the dUTPase family. The cofactor is Mg(2+).

The enzyme catalyses dUTP + H2O = dUMP + diphosphate + H(+). The protein operates within pyrimidine metabolism; dUMP biosynthesis; dUMP from dCTP (dUTP route): step 2/2. In terms of biological role, this enzyme is involved in nucleotide metabolism: it produces dUMP, the immediate precursor of thymidine nucleotides and it decreases the intracellular concentration of dUTP so that uracil cannot be incorporated into DNA. This Leptothrix cholodnii (strain ATCC 51168 / LMG 8142 / SP-6) (Leptothrix discophora (strain SP-6)) protein is Deoxyuridine 5'-triphosphate nucleotidohydrolase.